The following is a 396-amino-acid chain: Ribosomal RNA large subunit methyltransferase I (396 aa).

Residues 2-81 (SVRLVLAKGR…ESIDIAFFSR (80 aa)) form the PUA domain.

The protein belongs to the methyltransferase superfamily. RlmI family.

The protein resides in the cytoplasm. It carries out the reaction cytidine(1962) in 23S rRNA + S-adenosyl-L-methionine = 5-methylcytidine(1962) in 23S rRNA + S-adenosyl-L-homocysteine + H(+). Functionally, specifically methylates the cytosine at position 1962 (m5C1962) of 23S rRNA. The sequence is that of Ribosomal RNA large subunit methyltransferase I from Shigella boydii serotype 4 (strain Sb227).